The following is a 367-amino-acid chain: 4-hydroxy-3-methylbut-2-en-1-yl diphosphate synthase (flavodoxin) (367 aa).

Positions 265, 268, 300, and 307 each coordinate [4Fe-4S] cluster.

Belongs to the IspG family. The cofactor is [4Fe-4S] cluster.

It carries out the reaction (2E)-4-hydroxy-3-methylbut-2-enyl diphosphate + oxidized [flavodoxin] + H2O + 2 H(+) = 2-C-methyl-D-erythritol 2,4-cyclic diphosphate + reduced [flavodoxin]. The protein operates within isoprenoid biosynthesis; isopentenyl diphosphate biosynthesis via DXP pathway; isopentenyl diphosphate from 1-deoxy-D-xylulose 5-phosphate: step 5/6. In terms of biological role, converts 2C-methyl-D-erythritol 2,4-cyclodiphosphate (ME-2,4cPP) into 1-hydroxy-2-methyl-2-(E)-butenyl 4-diphosphate. This is 4-hydroxy-3-methylbut-2-en-1-yl diphosphate synthase (flavodoxin) from Bacillus cereus (strain ATCC 10987 / NRS 248).